The primary structure comprises 225 residues: Phosphoribosylformylglycinamidine synthase subunit PurQ (225 aa).

One can recognise a Glutamine amidotransferase type-1 domain in the interval 4–225 (RIGVITFPGT…LSVLDTLVTA (222 aa)). C87 serves as the catalytic Nucleophile. Catalysis depends on residues H196 and E198.

Part of the FGAM synthase complex composed of 1 PurL, 1 PurQ and 2 PurS subunits.

The protein localises to the cytoplasm. The enzyme catalyses N(2)-formyl-N(1)-(5-phospho-beta-D-ribosyl)glycinamide + L-glutamine + ATP + H2O = 2-formamido-N(1)-(5-O-phospho-beta-D-ribosyl)acetamidine + L-glutamate + ADP + phosphate + H(+). The catalysed reaction is L-glutamine + H2O = L-glutamate + NH4(+). It participates in purine metabolism; IMP biosynthesis via de novo pathway; 5-amino-1-(5-phospho-D-ribosyl)imidazole from N(2)-formyl-N(1)-(5-phospho-D-ribosyl)glycinamide: step 1/2. Functionally, part of the phosphoribosylformylglycinamidine synthase complex involved in the purines biosynthetic pathway. Catalyzes the ATP-dependent conversion of formylglycinamide ribonucleotide (FGAR) and glutamine to yield formylglycinamidine ribonucleotide (FGAM) and glutamate. The FGAM synthase complex is composed of three subunits. PurQ produces an ammonia molecule by converting glutamine to glutamate. PurL transfers the ammonia molecule to FGAR to form FGAM in an ATP-dependent manner. PurS interacts with PurQ and PurL and is thought to assist in the transfer of the ammonia molecule from PurQ to PurL. The sequence is that of Phosphoribosylformylglycinamidine synthase subunit PurQ from Nocardia farcinica (strain IFM 10152).